The primary structure comprises 247 residues: Small ribosomal subunit protein uS3 (247 aa).

Residues isoleucine 38 to lysine 106 form the KH type-2 domain. The segment covering serine 214–glycine 226 has biased composition (basic and acidic residues). A disordered region spans residues serine 214–glycine 247. Basic residues predominate over residues arginine 227–arginine 238.

Belongs to the universal ribosomal protein uS3 family. In terms of assembly, part of the 30S ribosomal subunit. Forms a tight complex with proteins S10 and S14.

In terms of biological role, binds the lower part of the 30S subunit head. Binds mRNA in the 70S ribosome, positioning it for translation. The protein is Small ribosomal subunit protein uS3 of Corynebacterium jeikeium (strain K411).